The following is a 197-amino-acid chain: MSFSRLFRLLKPTLLCGTLAVPGLAGTMCASRDDWRCARSMHEFSAKDIDGHMVNLDKYRGYVCIVTNVASQUGKTEVNYTQLVDLHARYAECGLRILAFPCNQFGRQEPGSDAEIKEFAAGYNVKFDMFSKICVNGDDAHPLWKWMKVQPKGRGMLGNAIKWNFTKFLIDKNGCVVKRYGPMEEPQVIEKDLPCYL.

A Phosphoserine modification is found at S40. U73 is an active-site residue. A non-standard amino acid (selenocysteine) is located at residue U73.

The protein belongs to the glutathione peroxidase family. Monomer. Has a tendency to form higher mass oligomers. Interacts with FUNDC1; this interaction promotes GPX4 recruitment into mitochondria through TOM/TIM complex where it is degraded by mitophagy.

Its subcellular location is the mitochondrion. The protein resides in the cytoplasm. The enzyme catalyses a hydroperoxy polyunsaturated fatty acid + 2 glutathione = a hydroxy polyunsaturated fatty acid + glutathione disulfide + H2O. It carries out the reaction 2 glutathione + H2O2 = glutathione disulfide + 2 H2O. It catalyses the reaction tert-butyl hydroperoxide + 2 glutathione = tert-butanol + glutathione disulfide + H2O. The catalysed reaction is cumene hydroperoxide + 2 glutathione = 2-phenylpropan-2-ol + glutathione disulfide + H2O. The enzyme catalyses (9S)-hydroperoxy-(10E,12Z)-octadecadienoate + 2 glutathione = (9S)-hydroxy-(10E,12Z)-octadecadienoate + glutathione disulfide + H2O. It carries out the reaction (13S)-hydroperoxy-(9Z,11E)-octadecadienoate + 2 glutathione = (13S)-hydroxy-(9Z,11E)-octadecadienoate + glutathione disulfide + H2O. It catalyses the reaction (5S)-hydroperoxy-(6E,8Z,11Z,14Z)-eicosatetraenoate + 2 glutathione = (5S)-hydroxy-(6E,8Z,11Z,14Z)-eicosatetraenoate + glutathione disulfide + H2O. The catalysed reaction is (12R)-hydroperoxy-(5Z,8Z,10E,14Z)-eicosatetraenoate + 2 glutathione = (12R)-hydroxy-(5Z,8Z,10E,14Z)-eicosatetraenoate + glutathione disulfide + H2O. The enzyme catalyses (12S)-hydroperoxy-(5Z,8Z,10E,14Z)-eicosatetraenoate + 2 glutathione = (12S)-hydroxy-(5Z,8Z,10E,14Z)-eicosatetraenoate + glutathione disulfide + H2O. It carries out the reaction (15S)-hydroperoxy-(5Z,8Z,11Z,13E)-eicosatetraenoate + 2 glutathione = (15S)-hydroxy-(5Z,8Z,11Z,13E)-eicosatetraenoate + glutathione disulfide + H2O. It catalyses the reaction (5S)-hydroperoxy-(6E,8Z,11Z,14Z,17Z)-eicosapentaenoate + 2 glutathione = (5S)-hydroxy-(6E,8Z,11Z,14Z,17Z)-eicosapentaenoate + glutathione disulfide + H2O. The catalysed reaction is (12S)-hydroperoxy-(5Z,8Z,10E,14Z,17Z)-eicosapentaenoate + 2 glutathione = (12S)-hydroxy-(5Z,8Z,10E,14Z,17Z)-eicosapentaenoate + glutathione disulfide + H2O. The enzyme catalyses (15S)-hydroperoxy-(5Z,8Z,11Z,13E,17Z)-eicosapentaenoate + 2 glutathione = (15S)-hydroxy-(5Z,8Z,11Z,13E,17Z)-eicosapentaenoate + glutathione disulfide + H2O. It carries out the reaction (15S)-hydroperoxy-(11Z,13E)-eicosadienoate + 2 glutathione = (15S)-hydroxy-(11Z,13E)-eicosadienoate + glutathione disulfide + H2O. It catalyses the reaction (17S)-hydroperoxy-(4Z,7Z,10Z,13Z,15E,19Z)-docosahexaenoate + 2 glutathione = (17S)-hydroxy-(4Z,7Z,10Z,13Z,15E,19Z)-docosahexaenoate + glutathione disulfide + H2O. The catalysed reaction is a hydroperoxy-1,2-diacyl-glycero-3-phosphocholine + 2 glutathione = a hydroxy-1,2-diacyl-glycero-3-phosphocholine + glutathione disulfide + H2O. Its function is as follows. Essential antioxidant peroxidase that directly reduces phospholipid hydroperoxide even if they are incorporated in membranes and lipoproteins. Can also reduce fatty acid hydroperoxide, cholesterol hydroperoxide and thymine hydroperoxide. Plays a key role in protecting cells from oxidative damage by preventing membrane lipid peroxidation. Required to prevent cells from ferroptosis, a non-apoptotic cell death resulting from an iron-dependent accumulation of lipid reactive oxygen species. The presence of selenocysteine (Sec) versus Cys at the active site is essential for life: it provides resistance to overoxidation and prevents cells against ferroptosis. The presence of Sec at the active site is also essential for the survival of a specific type of parvalbumin-positive interneurons, thereby preventing against fatal epileptic seizures. May be required to protect cells from the toxicity of ingested lipid hydroperoxides. Required for normal sperm development and male fertility. Essential for maturation and survival of photoreceptor cells. Plays a role in a primary T-cell response to viral and parasitic infection by protecting T-cells from ferroptosis and by supporting T-cell expansion. Plays a role of glutathione peroxidase in platelets in the arachidonic acid metabolism. Reduces hydroperoxy ester lipids formed by a 15-lipoxygenase that may play a role as down-regulator of the cellular 15-lipoxygenase pathway. Can also reduce small soluble hydroperoxides such as H2O2, cumene hydroperoxide and tert-butyl hydroperoxide. In Sus scrofa (Pig), this protein is Phospholipid hydroperoxide glutathione peroxidase.